A 222-amino-acid chain; its full sequence is von Willebrand factor C domain-containing protein 2-like (222 aa).

Residues 1–21 (MALHIHEACILLLVIPGLVTS) form the signal peptide. VWFC domains are found at residues 51-110 (KGCV…PECK) and 114-172 (NFCE…PVCK).

Peripherally associated with AMPAR complex. AMPAR complex consists of an inner core made of 4 pore-forming GluA/GRIA proteins (GRIA1, GRIA2, GRIA3 and GRIA4) and 4 major auxiliary subunits arranged in a twofold symmetry. One of the two pairs of distinct binding sites is occupied either by CNIH2, CNIH3 or CACNG2, CACNG3. The other harbors CACNG2, CACNG3, CACNG4, CACNG8 or GSG1L. This inner core of AMPAR complex is complemented by outer core constituents binding directly to the GluA/GRIA proteins at sites distinct from the interaction sites of the inner core constituents. Outer core constituents include at least PRRT1, PRRT2, CKAMP44/SHISA9, FRRS1L and NRN1. The proteins of the inner and outer core serve as a platform for other, more peripherally associated AMPAR constituents, including VWC2L. Alone or in combination, these auxiliary subunits control the gating and pharmacology of the AMPAR complex and profoundly impact their biogenesis and protein processing. Predominantly expressed in the brain (at protein level). Also detected in bones, including femur and calvaria, heart, lung and kidney. Isoform 5 is predominant in lung and heart, compared to isoforms 1 and 3. Isoform 4 is expressed in femur and calvaria at higher levels than isoforms 1 and 5. Isoforms 1 and 4 are expressed at higher levels than isoform 5 in kidney and brain.

The protein localises to the secreted. The protein resides in the synapse. Functionally, may play a role in neurogenesis. May promote matrix mineralization, but has been shown to weakly, but significantly inhibit BMP2 and BMP6 activity in a preosteoblastic cell line. This Mus musculus (Mouse) protein is von Willebrand factor C domain-containing protein 2-like (Vwc2l).